Here is a 644-residue protein sequence, read N- to C-terminus: Exoribonuclease 2 (644 aa).

The 328-residue stretch at 189–516 folds into the RNB domain; the sequence is RQDLTALNFV…NHRLLKAVIK (328 aa). One can recognise an S1 motif domain in the interval 561–643; sequence DTRFAAEIID…DTRSIIARPA (83 aa).

It belongs to the RNR ribonuclease family. RNase II subfamily.

Its subcellular location is the cytoplasm. It catalyses the reaction Exonucleolytic cleavage in the 3'- to 5'-direction to yield nucleoside 5'-phosphates.. Involved in mRNA degradation. Hydrolyzes single-stranded polyribonucleotides processively in the 3' to 5' direction. The sequence is that of Exoribonuclease 2 from Salmonella arizonae (strain ATCC BAA-731 / CDC346-86 / RSK2980).